Consider the following 409-residue polypeptide: Gamma-glutamyl phosphate reductase (409 aa).

It belongs to the gamma-glutamyl phosphate reductase family.

It localises to the cytoplasm. It catalyses the reaction L-glutamate 5-semialdehyde + phosphate + NADP(+) = L-glutamyl 5-phosphate + NADPH + H(+). Its pathway is amino-acid biosynthesis; L-proline biosynthesis; L-glutamate 5-semialdehyde from L-glutamate: step 2/2. Functionally, catalyzes the NADPH-dependent reduction of L-glutamate 5-phosphate into L-glutamate 5-semialdehyde and phosphate. The product spontaneously undergoes cyclization to form 1-pyrroline-5-carboxylate. In Bartonella tribocorum (strain CIP 105476 / IBS 506), this protein is Gamma-glutamyl phosphate reductase.